We begin with the raw amino-acid sequence, 191 residues long: Holliday junction branch migration complex subunit RuvA (191 aa).

Residues 1–63 (MIRYLRGLVL…EEGLSLYGFP (63 aa)) are domain I. Residues 64-136 (DEENLALFEL…LKGKVPPHLL (73 aa)) are domain II. The interval 136–140 (LAGEK) is flexible linker. The interval 141–191 (VESEAAEEAVMALAALGFKEAQARAVVLDLLAQNPKARAQDLIKEALKRLR) is domain III.

This sequence belongs to the RuvA family. Homotetramer. Forms an RuvA(8)-RuvB(12)-Holliday junction (HJ) complex. HJ DNA is sandwiched between 2 RuvA tetramers; dsDNA enters through RuvA and exits via RuvB. An RuvB hexamer assembles on each DNA strand where it exits the tetramer. Each RuvB hexamer is contacted by two RuvA subunits (via domain III) on 2 adjacent RuvB subunits; this complex drives branch migration. In the full resolvosome a probable DNA-RuvA(4)-RuvB(12)-RuvC(2) complex forms which resolves the HJ.

The protein resides in the cytoplasm. In terms of biological role, the RuvA-RuvB-RuvC complex processes Holliday junction (HJ) DNA during genetic recombination and DNA repair, while the RuvA-RuvB complex plays an important role in the rescue of blocked DNA replication forks via replication fork reversal (RFR). RuvA specifically binds to HJ cruciform DNA, conferring on it an open structure. The RuvB hexamer acts as an ATP-dependent pump, pulling dsDNA into and through the RuvAB complex. HJ branch migration allows RuvC to scan DNA until it finds its consensus sequence, where it cleaves and resolves the cruciform DNA. The polypeptide is Holliday junction branch migration complex subunit RuvA (Thermus thermophilus (strain ATCC BAA-163 / DSM 7039 / HB27)).